The primary structure comprises 610 residues: Protein arginine N-methyltransferase 5 (610 aa).

The region spanning 284 to 587 (LEIPLQPLCD…VDATKVWYEW (304 aa)) is the SAM-dependent MTase PRMT-type domain. Tyr300 contacts S-adenosyl-L-methionine. A protein is bound at residue Phe303. S-adenosyl-L-methionine-binding positions include 309–310 (KY), Glu368, and 396–397 (DM). A protein-binding residues include Glu412 and Glu421. Active-site proton donor/acceptor residues include Glu412 and Glu421. The segment at 470–610 (AFDYGYVSLL…TRGTGYNMRL (141 aa)) is interaction with vls.

Belongs to the class I-like SAM-binding methyltransferase superfamily. Protein arginine N-methyltransferase family. In terms of assembly, interacts with vls. In terms of tissue distribution, expressed only in ovaries.

It is found in the cytoplasm. Its function is as follows. Arginine methyltransferase that can both catalyze the formation of omega-N monomethylarginine (MMA) and symmetrical dimethylarginine (sDMA). Specifically mediates the symmetrical dimethylation of arginine residues in the small nuclear ribonucleoproteins SmD1 and SmD3. Required for arginine symmetrical dimethylation of piwi family proteins, piwi, aub and AGO3, during germline development. Required during oogenesis for pole cell formation in the pathway controlled by oskar (osk) and for abdominal segments during early embryogenesis. Involved in nanos (nos) and germ cell mRNAs localization. The protein is Protein arginine N-methyltransferase 5 of Drosophila melanogaster (Fruit fly).